The chain runs to 489 residues: Carboxyl-terminal-processing peptidase 1, chloroplastic (489 aa).

The segment covering 1 to 20 has biased composition (low complexity); that stretch reads MRLLLPFSSPLSATSSPSTP. The interval 1 to 27 is disordered; that stretch reads MRLLLPFSSPLSATSSPSTPQFIPELP. In terms of domain architecture, PDZ spans 189–273; that stretch reads FSRMSKYDIT…TFVVLKVKHG (85 aa). Catalysis depends on charge relay system residues Ser403 and Lys428.

It belongs to the peptidase S41A family.

It is found in the plastid. The protein resides in the chloroplast thylakoid lumen. It catalyses the reaction The enzyme shows specific recognition of a C-terminal tripeptide, Xaa-Yaa-Zaa, in which Xaa is preferably Ala or Leu, Yaa is preferably Ala or Tyr, and Zaa is preferably Ala, but then cleaves at a variable distance from the C-terminus. A typical cleavage is -Ala-Ala-|-Arg-Ala-Ala-Lys-Glu-Asn-Tyr-Ala-Leu-Ala-Ala.. Functionally, protease involved in the C-terminal processing of the chloroplastic D1 protein of photosystem II. This proteolytic processing is necessary to allow the light-driven assembly of the tetranuclear manganese cluster, which is responsible for photosynthetic water oxidation. This Arabidopsis thaliana (Mouse-ear cress) protein is Carboxyl-terminal-processing peptidase 1, chloroplastic (CTPA1).